The chain runs to 807 residues: DNA gyrase subunit B (807 aa).

Residues 429-543 (SELFIVEGDS…KGYLYIAQPP (115 aa)) enclose the Toprim domain. 3 residues coordinate Mg(2+): E435, D508, and D510.

It belongs to the type II topoisomerase GyrB family. Heterotetramer, composed of two GyrA and two GyrB chains. In the heterotetramer, GyrA contains the active site tyrosine that forms a transient covalent intermediate with DNA, while GyrB binds cofactors and catalyzes ATP hydrolysis. The cofactor is Mg(2+). Mn(2+) serves as cofactor. Ca(2+) is required as a cofactor.

Its subcellular location is the cytoplasm. The enzyme catalyses ATP-dependent breakage, passage and rejoining of double-stranded DNA.. In terms of biological role, a type II topoisomerase that negatively supercoils closed circular double-stranded (ds) DNA in an ATP-dependent manner to modulate DNA topology and maintain chromosomes in an underwound state. Negative supercoiling favors strand separation, and DNA replication, transcription, recombination and repair, all of which involve strand separation. Also able to catalyze the interconversion of other topological isomers of dsDNA rings, including catenanes and knotted rings. Type II topoisomerases break and join 2 DNA strands simultaneously in an ATP-dependent manner. In Rickettsia conorii (strain ATCC VR-613 / Malish 7), this protein is DNA gyrase subunit B.